The following is a 120-amino-acid chain: Large ribosomal subunit protein bL19 (120 aa).

This sequence belongs to the bacterial ribosomal protein bL19 family.

Its function is as follows. This protein is located at the 30S-50S ribosomal subunit interface and may play a role in the structure and function of the aminoacyl-tRNA binding site. The sequence is that of Large ribosomal subunit protein bL19 from Renibacterium salmoninarum (strain ATCC 33209 / DSM 20767 / JCM 11484 / NBRC 15589 / NCIMB 2235).